Here is a 497-residue protein sequence, read N- to C-terminus: Bloodstream-specific protein 2 (497 aa).

A signal peptide spans 1-14 (MRAIFLVALALATM). The 110-residue stretch at 15–124 (RESTAESLKL…IIKYIKANVG (110 aa)) folds into the Thioredoxin 1 domain. N-linked (GlcNAc...) asparagine glycosylation is present at asparagine 30. A disulfide bond links cysteine 48 and cysteine 51. Residues asparagine 63, asparagine 85, asparagine 153, asparagine 154, asparagine 250, and asparagine 278 are each glycosylated (N-linked (GlcNAc...) asparagine). One can recognise a Thioredoxin 2 domain in the interval 334–455 (EPTIKSLPVP…VYEFVRKHVT (122 aa)). Catalysis depends on nucleophile residues cysteine 378 and cysteine 381. The cysteines at positions 378 and 381 are disulfide-linked. N-linked (GlcNAc...) asparagine glycosylation is found at asparagine 413, asparagine 465, asparagine 476, asparagine 482, asparagine 485, and asparagine 488. Residues 461–497 (EKPANVTEEKKSEEENKSSKSNESNDSNESNVDKQDL) form a disordered region. Basic and acidic residues predominate over residues 467 to 480 (TEEKKSEEENKSSK). Residues 481 to 490 (SNESNDSNES) are compositionally biased toward low complexity.

This sequence belongs to the protein disulfide isomerase family.

This is Bloodstream-specific protein 2 (BS2) from Trypanosoma brucei brucei.